Reading from the N-terminus, the 167-residue chain is Putative C-type lectin protein FPV008/FPV253 (167 aa).

Residues 49 to 152 (CPDEWIGYNS…SCIFHERTIC (104 aa)) enclose the C-type lectin domain. 2 cysteine pairs are disulfide-bonded: C77–C152 and C131–C144.

The chain is Putative C-type lectin protein FPV008/FPV253 from Vertebrata (FPV).